The chain runs to 449 residues: Cortexillin-2 (449 aa).

Positions 1-231 are actin-binding; sequence MTDLHKEWEK…ILYTSLFFHA (231 aa). 2 Calponin-homology (CH) domains span residues 10-119 and 128-233; these read KVQE…RKYR and KSSE…HAYR. Coiled-coil stretches lie at residues 232 to 364 and 408 to 441; these read YRAK…AEGL and QFEE…LKSA.

It belongs to the cortexillin family. In terms of assembly, homodimer; parallel.

Its subcellular location is the cytoplasm. It localises to the cytoskeleton. In terms of biological role, actin-bundling protein. When linked to F-actin the actin filaments form preferentially anti-parallel bundles that associate into meshworks. Plays a major role in cytokinesis. In Heterostelium pallidum (strain ATCC 26659 / Pp 5 / PN500) (Cellular slime mold), this protein is Cortexillin-2 (ctxB).